A 248-amino-acid polypeptide reads, in one-letter code: PACRG-like protein (248 aa).

Met1 bears the N-acetylmethionine mark. A disordered region spans residues 1–72 (MQRSECSGGV…NPKTINPFGE (72 aa)). Polar residues-rich tracts occupy residues 14-29 (NRATGSNDQRTSSSTQ) and 36-45 (VQRSKSSSLT). Phosphoserine is present on Ser47.

The chain is PACRG-like protein (Pacrgl) from Mus musculus (Mouse).